A 491-amino-acid polypeptide reads, in one-letter code: V-type proton ATPase subunit B 1 (491 aa).

ATP is bound at residue R380.

Belongs to the ATPase alpha/beta chains family. As to quaternary structure, V-ATPase is a heteromultimeric enzyme made up of two complexes: the ATP-hydrolytic V1 complex and the proton translocation V0 complex. The V1 complex consists of three catalytic AB heterodimers that form a heterohexamer, three peripheral stalks each consisting of EG heterodimers, one central rotor including subunits D and F, and the regulatory subunits C and H. The proton translocation complex V0 consists of the proton transport subunit a, a ring of proteolipid subunits c9c'', rotary subunit d, subunits e and f, and the accessory subunits vah-19/Ac45 and vah-20/PRR. Expressed ubiquitously. Highly expressed in the H-shaped excretory cell, the excretory pore, the intestine, and hypodermal cells. Expressed in the nervous system. Expressed at low levels in muscles.

Non-catalytic subunit of the V1 complex of vacuolar(H+)-ATPase (V-ATPase), a multisubunit enzyme composed of a peripheral complex (V1) that hydrolyzes ATP and a membrane integral complex (V0) that translocates protons. V-ATPase is responsible for acidifying and maintaining the pH of intracellular compartments and in some cell types, is targeted to the plasma membrane, where it is responsible for acidifying the extracellular environment. Essential for the proper assembly and activity of V-ATPase. Required maternally for early embryogenesis and zygotically during morphogenesis. Specifically, involved in the clearance of apoptotic cell corpses in embryos. Also, during embryonic development, the V-ATPase is required to repress fusion of epidermal cells probably by negatively regulating eff-1-mediated cell fusion. In neurons, required for necrotic cell death by promoting intracellular acidification. Required for cell death induced by hypoxia. Required for acidification of synaptic vesicles and the release of neurotransmitters from adult neurons. This Caenorhabditis elegans protein is V-type proton ATPase subunit B 1.